Here is a 235-residue protein sequence, read N- to C-terminus: tRNA (guanine-N(7)-)-methyltransferase (235 aa).

S-adenosyl-L-methionine contacts are provided by residues Gly60, Glu83–Ile84, Asn116–Ala117, and Leu136. Asp139 is an active-site residue. Ser214–Glu216 lines the S-adenosyl-L-methionine pocket.

Belongs to the class I-like SAM-binding methyltransferase superfamily. TrmB family.

Its subcellular location is the nucleus. It catalyses the reaction guanosine(46) in tRNA + S-adenosyl-L-methionine = N(7)-methylguanosine(46) in tRNA + S-adenosyl-L-homocysteine. It functions in the pathway tRNA modification; N(7)-methylguanine-tRNA biosynthesis. Catalyzes the formation of N(7)-methylguanine at position 46 (m7G46) in tRNA. This Anopheles gambiae (African malaria mosquito) protein is tRNA (guanine-N(7)-)-methyltransferase.